A 1061-amino-acid polypeptide reads, in one-letter code: Calcium-transporting ATPase 4, endoplasmic reticulum-type (1061 aa).

Residues 1–21 (MGKGGEDCGNKQTNSSELVKS) form a disordered region. Topologically, residues 1 to 70 (MGKGGEDCGN…NELEKPEGTS (70 aa)) are cytoplasmic. Residues 71 to 91 (IFKLILEQFNDTLVRILLAAA) form a helical membrane-spanning segment. The Lumenal segment spans residues 92 to 115 (VISFVLAFFDGDEGGEMGITAFVE). A helical membrane pass occupies residues 116–135 (PLVIFLILIVNAIVGIWQET). The Cytoplasmic segment spans residues 136–278 (NAEKALEALK…EEDTPLKKKL (143 aa)). The helical transmembrane segment at 279-298 (NEFGEVLTMIIGLICALVWL) threads the bilayer. Residues 299–327 (INVKYFLSWEYVDGWPRNFKFSFEKCTYY) are Lumenal-facing. A helical transmembrane segment spans residues 328 to 345 (FEIAVALAVAAIPEGLPA). Ca(2+) contacts are provided by V336, A337, I339, and E341. Residues 346-786 (VITTCLALGT…GEGRSIYNNM (441 aa)) lie on the Cytoplasmic side of the membrane. The active-site 4-aspartylphosphate intermediate is D383. Mg(2+) contacts are provided by D731 and D735. The helical transmembrane segment at 787-806 (KAFIRYMISSNIGEVASIFL) threads the bilayer. Ca(2+)-binding residues include N797 and E800. The Lumenal portion of the chain corresponds to 807–816 (TAALGIPEGM). A helical transmembrane segment spans residues 817–837 (IPVQLLWVNLVTDGPPATALG). Ca(2+) is bound by residues N825, T828, and D829. The Cytoplasmic portion of the chain corresponds to 838 to 857 (FNPPDKDIMKKPPRRSDDSL). The helical transmembrane segment at 858–880 (ITAWILFRYMVIGLYVGVATVGV) threads the bilayer. Residues 881–950 (FIIWYTHNSF…YFQQGKIKAS (70 aa)) are Lumenal-facing. A helical membrane pass occupies residues 951 to 970 (TLSLSVLVAIEMFNSLNALS). Residue E961 participates in Ca(2+) binding. Over 971–983 (EDGSLVTMPPWVN) the chain is Cytoplasmic. The helical transmembrane segment at 984–1002 (PWLLLAMAVSFGLHFVILY) threads the bilayer. Over 1003–1017 (VPFLAQVFGIVPLSL) the chain is Lumenal. The chain crosses the membrane as a helical span at residues 1018-1038 (NEWLLVLAVSLPVILIDEVLK). At 1039–1061 (FVGRCTSGYRYSPRTPSAKQKEE) the chain is on the cytoplasmic side.

This sequence belongs to the cation transport ATPase (P-type) (TC 3.A.3) family. Type IIA subfamily.

Its subcellular location is the membrane. It carries out the reaction Ca(2+)(in) + ATP + H2O = Ca(2+)(out) + ADP + phosphate + H(+). Functionally, this magnesium-dependent enzyme catalyzes the hydrolysis of ATP coupled with the translocation of calcium from the cytosol to an endomembrane compartment. This is Calcium-transporting ATPase 4, endoplasmic reticulum-type (ECA4) from Arabidopsis thaliana (Mouse-ear cress).